We begin with the raw amino-acid sequence, 624 residues long: Probable potassium transport system protein Kup 2 (624 aa).

The next 12 helical transmembrane spans lie at 14 to 34 (LSFA…LYAF), 51 to 71 (ILSL…LVIV), 97 to 117 (GGWL…DGML), 133 to 153 (LSPN…FFLF), 163 to 183 (IGVY…ILGF), 211 to 231 (SALF…ALFA), 245 to 265 (WFAV…AFVL), 283 to 303 (FLPV…QAII), 335 to 355 (VYLP…VVIF), 364 to 384 (AYGI…GIIA), 393 to 413 (FKIL…AGNI), and 416 to 436 (LLTG…VMYT).

This sequence belongs to the HAK/KUP transporter (TC 2.A.72) family.

It localises to the cell inner membrane. The catalysed reaction is K(+)(in) + H(+)(in) = K(+)(out) + H(+)(out). In terms of biological role, transport of potassium into the cell. Likely operates as a K(+):H(+) symporter. In Legionella pneumophila (strain Lens), this protein is Probable potassium transport system protein Kup 2.